A 453-amino-acid polypeptide reads, in one-letter code: Bifunctional protein GlmU (453 aa).

Positions 1–225 (MNIVILAAGT…EWETLGVNSK (225 aa)) are pyrophosphorylase. UDP-N-acetyl-alpha-D-glucosamine contacts are provided by residues 6–9 (LAAG), K20, Q71, 76–77 (GT), 98–100 (YGD), G135, E150, N165, and N223. D100 contributes to the Mg(2+) binding site. N223 serves as a coordination point for Mg(2+). The tract at residues 226–246 (QQLAELERIHQRNVADDLLVA) is linker. Residues 247-453 (GVTIADPARI…GYVRPTKKKS (207 aa)) form an N-acetyltransferase region. R329 and K347 together coordinate UDP-N-acetyl-alpha-D-glucosamine. H359 functions as the Proton acceptor in the catalytic mechanism. Residues Y362 and N373 each coordinate UDP-N-acetyl-alpha-D-glucosamine. Acetyl-CoA is bound by residues A376, 382–383 (NY), S401, and A419.

It in the N-terminal section; belongs to the N-acetylglucosamine-1-phosphate uridyltransferase family. The protein in the C-terminal section; belongs to the transferase hexapeptide repeat family. Homotrimer. It depends on Mg(2+) as a cofactor.

Its subcellular location is the cytoplasm. The catalysed reaction is alpha-D-glucosamine 1-phosphate + acetyl-CoA = N-acetyl-alpha-D-glucosamine 1-phosphate + CoA + H(+). The enzyme catalyses N-acetyl-alpha-D-glucosamine 1-phosphate + UTP + H(+) = UDP-N-acetyl-alpha-D-glucosamine + diphosphate. It functions in the pathway nucleotide-sugar biosynthesis; UDP-N-acetyl-alpha-D-glucosamine biosynthesis; N-acetyl-alpha-D-glucosamine 1-phosphate from alpha-D-glucosamine 6-phosphate (route II): step 2/2. It participates in nucleotide-sugar biosynthesis; UDP-N-acetyl-alpha-D-glucosamine biosynthesis; UDP-N-acetyl-alpha-D-glucosamine from N-acetyl-alpha-D-glucosamine 1-phosphate: step 1/1. Its pathway is bacterial outer membrane biogenesis; LPS lipid A biosynthesis. Its function is as follows. Catalyzes the last two sequential reactions in the de novo biosynthetic pathway for UDP-N-acetylglucosamine (UDP-GlcNAc). The C-terminal domain catalyzes the transfer of acetyl group from acetyl coenzyme A to glucosamine-1-phosphate (GlcN-1-P) to produce N-acetylglucosamine-1-phosphate (GlcNAc-1-P), which is converted into UDP-GlcNAc by the transfer of uridine 5-monophosphate (from uridine 5-triphosphate), a reaction catalyzed by the N-terminal domain. The sequence is that of Bifunctional protein GlmU from Paraburkholderia phymatum (strain DSM 17167 / CIP 108236 / LMG 21445 / STM815) (Burkholderia phymatum).